Consider the following 663-residue polypeptide: Innate immunity activator protein (663 aa).

The disordered stretch occupies residues 1–68; the sequence is MLQMPKLNEI…RLPTQPGPGW (68 aa). The segment covering 40 to 50 has biased composition (low complexity); sequence RAQGQAGGARA. Residues 118-147 adopt a coiled-coil conformation; that stretch reads AVHKQQRALEARLEACLEELRRLCLREAEL. Residues 164–170 carry the Nuclear localization signal (NLS) 1 motif; the sequence is PKVRRRI. Disordered regions lie at residues 242 to 362, 378 to 425, and 444 to 493; these read RRRN…ASSL, VPGQ…PRRR, and PLPH…RHRG. The segment covering 259–272 has biased composition (low complexity); sequence ELSASDDSSLSDGL. Over residues 282-298 the composition is skewed to pro residues; it reads PKPPPESPAPPSRPLPP. Residues 327 to 340 are compositionally biased toward basic and acidic residues; the sequence is TSLDHPYEKPRKSS. Residues 332–338 carry the Nuclear localization signal (NLS) 2 motif; the sequence is PYEKPRK. Polar residues predominate over residues 350 to 361; it reads ATTPQDGPSASS. A Nuclear localization signal (NLS) 3 motif is present at residues 422–428; that stretch reads PRRRPTH. Low complexity predominate over residues 455-475; sequence EDSGSDVSSISHPTSPGSSSP.

Interacts with IRAK1, NOD2 and RIPK2; the interaction takes place upon PRR stimulation. Interacts with YWHAQ/14-3-3T; the interaction increases upon PRR stimulation and is required for cellular signaling pathway activation and cytokine secretion. Interacts (via N-terminal domain) with CYTH1 and CYTH2 (via their N-terminal domains). Interacts with FBXW11 and BTRC; associates with SCF E3 ubiquitin-protein ligase complexes. In terms of tissue distribution, highly expressed in intestinal myeloid-derived cells and expressed in monocyte-derived macrophages upon induction by PRR activation.

Its subcellular location is the nucleus. It localises to the cytoplasm. Functionally, expressed in peripheral macrophages and intestinal myeloid-derived cells, is required for optimal PRR (pattern recognition receptor)-induced signaling, cytokine secretion, and bacterial clearance. Upon stimulation of a broad range of PRRs (pattern recognition receptor) such as NOD2 or TLR2, TLR3, TLR4, TLR5, TLR7 and TLR9, associates with YWHAQ/14-3-3T, which in turn leads to the recruitment and activation of MAP kinases and NF-kappa-B signaling complexes that amplifies PRR-induced downstream signals and cytokine secretion. In the intestine, regulates adherens junction stability by regulating the degradation of CYTH1 and CYTH2, probably acting as substrate cofactor for SCF E3 ubiquitin-protein ligase complexes. Stabilizes adherens junctions by limiting CYTH1-dependent ARF6 activation. This is Innate immunity activator protein from Homo sapiens (Human).